A 613-amino-acid chain; its full sequence is DNA mismatch repair protein MutL (613 aa).

Belongs to the DNA mismatch repair MutL/HexB family.

In terms of biological role, this protein is involved in the repair of mismatches in DNA. It is required for dam-dependent methyl-directed DNA mismatch repair. May act as a 'molecular matchmaker', a protein that promotes the formation of a stable complex between two or more DNA-binding proteins in an ATP-dependent manner without itself being part of a final effector complex. The chain is DNA mismatch repair protein MutL from Flavobacterium psychrophilum (strain ATCC 49511 / DSM 21280 / CIP 103535 / JIP02/86).